A 246-amino-acid chain; its full sequence is Proteasome subunit alpha type-6-B (246 aa).

This sequence belongs to the peptidase T1A family. Component of the 20S core complex of the 26S proteasome. The 26S proteasome is composed of a core protease (CP), known as the 20S proteasome, capped at one or both ends by the 19S regulatory particle (RP/PA700). The 20S proteasome core is composed of 28 subunits that are arranged in four stacked rings, resulting in a barrel-shaped structure. The two end rings are each formed by seven alpha subunits, and the two central rings are each formed by seven beta subunits. The catalytic chamber with the active sites is on the inside of the barrel.

It localises to the cytoplasm. It is found in the nucleus. In terms of biological role, the proteasome is a multicatalytic proteinase complex which is characterized by its ability to cleave peptides with Arg, Phe, Tyr, Leu, and Glu adjacent to the leaving group at neutral or slightly basic pH. The proteasome has an ATP-dependent proteolytic activity. In Arabidopsis thaliana (Mouse-ear cress), this protein is Proteasome subunit alpha type-6-B (PAA2).